We begin with the raw amino-acid sequence, 507 residues long: ATP synthase subunit alpha, chloroplastic (507 aa).

170 to 177 (GDRQTGKT) serves as a coordination point for ATP.

It belongs to the ATPase alpha/beta chains family. F-type ATPases have 2 components, CF(1) - the catalytic core - and CF(0) - the membrane proton channel. CF(1) has five subunits: alpha(3), beta(3), gamma(1), delta(1), epsilon(1). CF(0) has four main subunits: a, b, b' and c.

Its subcellular location is the plastid. The protein localises to the chloroplast thylakoid membrane. The catalysed reaction is ATP + H2O + 4 H(+)(in) = ADP + phosphate + 5 H(+)(out). Functionally, produces ATP from ADP in the presence of a proton gradient across the membrane. The alpha chain is a regulatory subunit. The protein is ATP synthase subunit alpha, chloroplastic of Ranunculus macranthus (Large buttercup).